A 525-amino-acid chain; its full sequence is GMP synthase [glutamine-hydrolyzing] (525 aa).

The Glutamine amidotransferase type-1 domain occupies 8-207 (KILILDFGSQ…ALDICGCAAN (200 aa)). Catalysis depends on C85, which acts as the Nucleophile. Catalysis depends on residues H181 and E183. A GMPS ATP-PPase domain is found at 208 to 400 (WKPSSIIEDA…LGLPYNMLYR (193 aa)). 235 to 241 (SGGVDSS) provides a ligand contact to ATP.

As to quaternary structure, homodimer.

It carries out the reaction XMP + L-glutamine + ATP + H2O = GMP + L-glutamate + AMP + diphosphate + 2 H(+). The protein operates within purine metabolism; GMP biosynthesis; GMP from XMP (L-Gln route): step 1/1. Its function is as follows. Catalyzes the synthesis of GMP from XMP. In Shewanella sp. (strain MR-7), this protein is GMP synthase [glutamine-hydrolyzing].